The following is a 398-amino-acid chain: ATP-dependent RNA helicase eIF4A (398 aa).

A Q motif motif is present at residues 25-53; that stretch reads DSFDSMDLKPELLRGVYAYGFERPSAIQQ. Residues 56 to 226 form the Helicase ATP-binding domain; sequence IKPIIAGHDV…TKFMRDPIRI (171 aa). 69 to 76 serves as a coordination point for ATP; that stretch reads AQSGTGKT. The DEAD box signature appears at 174 to 177; the sequence is DEAD. A Helicase C-terminal domain is found at 237 to 398; that stretch reads GIKQFYIAVE…EMPMNVADLI (162 aa).

It belongs to the DEAD box helicase family. eIF4A subfamily. In terms of assembly, component of the eIF4F complex, which composition varies with external and internal environmental conditions. It is composed of at least eIF4A, eIF4E and eIF4G.

It is found in the cytoplasm. It catalyses the reaction ATP + H2O = ADP + phosphate + H(+). Its function is as follows. ATP-dependent RNA helicase which is a subunit of the eIF4F complex involved in cap recognition and is required for mRNA binding to ribosome. In the current model of translation initiation, eIF4A unwinds RNA secondary structures in the 5'-UTR of mRNAs which is necessary to allow efficient binding of the small ribosomal subunit, and subsequent scanning for the initiator codon. This is ATP-dependent RNA helicase eIF4A (tif1) from Aspergillus niger (strain ATCC MYA-4892 / CBS 513.88 / FGSC A1513).